Reading from the N-terminus, the 633-residue chain is uncharacterized protein (633 aa).

This is an uncharacterized protein from Archaeoglobus fulgidus (strain ATCC 49558 / DSM 4304 / JCM 9628 / NBRC 100126 / VC-16).